Here is a 459-residue protein sequence, read N- to C-terminus: Carbonic anhydrase 9 (459 aa).

The N-terminal stretch at 1–37 is a signal peptide; the sequence is MAPLCPSPWLPLLIPAPAPGLTVQLLLSLLLLVPVHP. Residues 38-112 form a proteoglycan-like (PG) region; the sequence is QRLPRMQEDS…EEEGSLKLED (75 aa). The Extracellular portion of the chain corresponds to 38–414; the sequence is QRLPRMQEDS…QLNSCLAAGD (377 aa). The segment at 42-154 is disordered; it reads RMQEDSPLGG…GDPPWPRVSP (113 aa). Residues 55-95 show a composition bias toward acidic residues; that stretch reads GEDDPLGEEDLPSEEDSPREEDPPGEEDLPGEEDLPGEEDL. Residues 96 to 112 are compositionally biased toward basic and acidic residues; sequence PEVKPKSEEEGSLKLED. Thr-115 carries an O-linked (GlcNAc...) threonine glycan. The segment covering 129 to 140 has biased composition (basic and acidic residues); the sequence is AHRDKEGDDQSH. Residues 138-391 are catalytic; sequence QSHWRYGGDP…NGRVIEASFP (254 aa). Residues 139 to 390 form the Alpha-carbonic anhydrase domain; it reads SHWRYGGDPP…LNGRVIEASF (252 aa). A disulfide bridge connects residues Cys-156 and Cys-336. His-200 functions as the Proton donor/acceptor in the catalytic mechanism. Zn(2+) is bound by residues His-226, His-228, and His-251. Position 332–333 (332–333) interacts with substrate; it reads TT. Asn-346 carries an N-linked (GlcNAc...) asparagine glycan. Residues 415-435 traverse the membrane as a helical segment; it reads ILALVFGLLFAVTSVAFLVQM. The Cytoplasmic segment spans residues 436-459; that stretch reads RRQHRRGTKGGVSYRPAEVAETGA. At Tyr-449 the chain carries Phosphotyrosine.

This sequence belongs to the alpha-carbonic anhydrase family. In terms of assembly, forms oligomers linked by disulfide bonds. Requires Zn(2+) as cofactor. In terms of processing, asn-346 bears high-mannose type glycan structures. In terms of tissue distribution, expressed primarily in carcinoma cells lines. Expression is restricted to very few normal tissues and the most abundant expression is found in the epithelial cells of gastric mucosa.

The protein localises to the nucleus. It is found in the nucleolus. It localises to the cell membrane. The protein resides in the cell projection. Its subcellular location is the microvillus membrane. The catalysed reaction is hydrogencarbonate + H(+) = CO2 + H2O. Inhibited by coumarins, saccharin, sulfonamide derivatives such as acetazolamide (AZA) and Foscarnet (phosphonoformate trisodium salt). Catalyzes the interconversion between carbon dioxide and water and the dissociated ions of carbonic acid (i.e. bicarbonate and hydrogen ions). In Homo sapiens (Human), this protein is Carbonic anhydrase 9 (CA9).